Here is a 142-residue protein sequence, read N- to C-terminus: Transcriptional regulator MraZ (142 aa).

SpoVT-AbrB domains are found at residues 5 to 47 and 76 to 119; these read EYPY…PLAS and ANKA…NPGR.

It belongs to the MraZ family. Forms oligomers.

The protein localises to the cytoplasm. It is found in the nucleoid. In Deinococcus deserti (strain DSM 17065 / CIP 109153 / LMG 22923 / VCD115), this protein is Transcriptional regulator MraZ.